A 363-amino-acid chain; its full sequence is Glyceraldehyde-3-phosphate dehydrogenase, muscle (363 aa).

An interaction with WARS region spans residues 1-176 (MVKVGVNGFG…KYDKSLKIVS (176 aa)). Residue Lys-3 is modified to N6,N6-dimethyllysine. Asn-7 bears the Deamidated asparagine mark. Residues 11 to 12 (RI) and Asp-33 each bind NAD(+). A Phosphotyrosine modification is found at Tyr-70. Residue Lys-89 is modified to N6-acetyllysine. Deamidated asparagine is present on Asn-92. Lys-94 bears the N6,N6-dimethyllysine mark. Asn-98 carries the post-translational modification Deamidated asparagine. Thr-103 carries the post-translational modification Phosphothreonine. NAD(+)-binding residues include Arg-108 and Ser-150. Residues Ser-150 and Ser-176 each carry the phosphoserine modification. Asn-177 carries the post-translational modification Deamidated asparagine. Ser-179 carries the phosphoserine modification. 179–181 (SCT) is a D-glyceraldehyde 3-phosphate binding site. Cys-180 (nucleophile) is an active-site residue. Cys-180 carries the ADP-ribosylcysteine; by autocatalysis; in irreversibly inhibited form modification. Residue Cys-180 is modified to Cysteine persulfide. Position 180 is an S-(2-succinyl)cysteine (Cys-180). Cys-180 is subject to S-nitrosocysteine; in reversibly inhibited form. Position 181 is a phosphothreonine (Thr-181). Residue Asn-183 is modified to Deamidated asparagine. Phosphothreonine is present on residues Thr-205, Thr-210, and Thr-212. Residue Thr-210 participates in D-glyceraldehyde 3-phosphate binding. Lys-214 participates in a covalent cross-link: Glycyl lysine isopeptide (Lys-Gly) (interchain with G-Cter in SUMO2). Lys-222 carries the post-translational modification N6,N6-dimethyllysine; alternate. Position 222 is an N6-acetyllysine; alternate (Lys-222). The residue at position 222 (Lys-222) is an N6-malonyllysine; alternate. At Thr-239 the chain carries Phosphothreonine. 239–240 (TG) provides a ligand contact to D-glyceraldehyde 3-phosphate. Residue Lys-243 is modified to N6,N6-dimethyllysine; alternate. Residue Lys-243 is modified to N6-malonyllysine; alternate. Residue Lys-247 is modified to N6-acetyllysine. Asn-253 carries the post-translational modification Deamidated asparagine. Position 255 is an N6,N6-dimethyllysine; alternate (Lys-255). Lys-255 carries the N6-acetyllysine; alternate modification. Position 257 is a phosphothreonine (Thr-257). Arg-262 lines the D-glyceraldehyde 3-phosphate pocket. At Thr-265 the chain carries Phosphothreonine. Ser-269 carries the phosphoserine modification. At Cys-275 the chain carries S-(2-succinyl)cysteine. Cys-275 is modified (S-nitrosocysteine). Residue Lys-282 is modified to N6-acetyllysine. Residue Lys-291 is modified to N6,N6-dimethyllysine. Phosphoserine is present on Ser-340. Asn-344 carries the post-translational modification Deamidated asparagine. Asn-344 serves as a coordination point for NAD(+). Residue Ser-361 is modified to Phosphoserine. Lys-362 carries the post-translational modification N6,N6-dimethyllysine.

It belongs to the glyceraldehyde-3-phosphate dehydrogenase family. As to quaternary structure, homotetramer. Interacts with TPPP; the interaction is direct. Interacts (when S-nitrosylated) with SIAH1; leading to nuclear translocation. Interacts with RILPL1/GOSPEL, leading to prevent the interaction between GAPDH and SIAH1 and prevent nuclear translocation. Interacts with CHP1; the interaction increases the binding of CHP1 with microtubules. Associates with microtubules. Interacts with EIF1AD, USP25, PRKCI and WARS1. Interacts with phosphorylated RPL13A; inhibited by oxidatively-modified low-densitity lipoprotein (LDL(ox)). Component of the GAIT complex. Interacts with FKBP6; leading to inhibit GAPDH catalytic activity. Interacts with TRAF2, promoting TRAF2 ubiquitination. Interacts with TRAF3, promoting TRAF3 ubiquitination. Post-translationally, ISGylated. S-nitrosylation of Cys-180 leads to interaction with SIAH1, followed by translocation to the nucleus S-nitrosylation of Cys-275 is induced by interferon-gamma and LDL(ox) implicating the iNOS-S100A8/9 transnitrosylase complex and seems to prevent interaction with phosphorylated RPL13A and to interfere with GAIT complex activity. In terms of processing, sulfhydration at Cys-180 increases catalytic activity.

The protein resides in the cytoplasm. It localises to the cytosol. It is found in the cytoskeleton. The protein localises to the nucleus. It carries out the reaction D-glyceraldehyde 3-phosphate + phosphate + NAD(+) = (2R)-3-phospho-glyceroyl phosphate + NADH + H(+). The catalysed reaction is S-nitroso-L-cysteinyl-[GAPDH] + L-cysteinyl-[protein] = L-cysteinyl-[GAPDH] + S-nitroso-L-cysteinyl-[protein]. Its pathway is carbohydrate degradation; glycolysis; pyruvate from D-glyceraldehyde 3-phosphate: step 1/5. Glyceraldehyde-3-phosphate dehydrogenase activity is inhibited by fumarate, via the formation of S-(2-succinyl)cysteine residues. Its function is as follows. Has both glyceraldehyde-3-phosphate dehydrogenase and nitrosylase activities, thereby playing a role in glycolysis and nuclear functions, respectively. Glyceraldehyde-3-phosphate dehydrogenase is a key enzyme in glycolysis that catalyzes the first step of the pathway by converting D-glyceraldehyde 3-phosphate (G3P) into 3-phospho-D-glyceroyl phosphate. Modulates the organization and assembly of the cytoskeleton. Facilitates the CHP1-dependent microtubule and membrane associations through its ability to stimulate the binding of CHP1 to microtubules. Component of the GAIT (gamma interferon-activated inhibitor of translation) complex which mediates interferon-gamma-induced transcript-selective translation inhibition in inflammation processes. Upon interferon-gamma treatment assembles into the GAIT complex which binds to stem loop-containing GAIT elements in the 3'-UTR of diverse inflammatory mRNAs (such as ceruplasmin) and suppresses their translation. Also plays a role in innate immunity by promoting TNF-induced NF-kappa-B activation and type I interferon production, via interaction with TRAF2 and TRAF3, respectively. Participates in nuclear events including transcription, RNA transport, DNA replication and apoptosis. Nuclear functions are probably due to the nitrosylase activity that mediates cysteine S-nitrosylation of nuclear target proteins such as SIRT1, HDAC2 and PRKDC. This is Glyceraldehyde-3-phosphate dehydrogenase, muscle from Jaculus orientalis (Greater Egyptian jerboa).